The following is a 137-amino-acid chain: Large ribosomal subunit protein uL16 (137 aa).

Belongs to the universal ribosomal protein uL16 family. As to quaternary structure, part of the 50S ribosomal subunit.

In terms of biological role, binds 23S rRNA and is also seen to make contacts with the A and possibly P site tRNAs. This chain is Large ribosomal subunit protein uL16, found in Pseudomonas putida (strain ATCC 47054 / DSM 6125 / CFBP 8728 / NCIMB 11950 / KT2440).